A 486-amino-acid chain; its full sequence is Cardiolipin synthase A (486 aa).

2 consecutive transmembrane segments (helical) span residues 3–23 and 38–58; these read TFYTVVNWLVILGYWLLIAGV and MAWLLIIYILPLVGIIAYLSF. PLD phosphodiesterase domains follow at residues 219 to 246 and 399 to 426; these read MDLRQHRKMVMIDNYIAYTGSMNMVDPR and EGGLLHTKSVLVDGELSLVGTVNLDMRS. Active-site residues include histidine 224, lysine 226, aspartate 231, histidine 404, lysine 406, and aspartate 411.

This sequence belongs to the phospholipase D family. Cardiolipin synthase subfamily. ClsA sub-subfamily.

It localises to the cell inner membrane. It carries out the reaction 2 a 1,2-diacyl-sn-glycero-3-phospho-(1'-sn-glycerol) = a cardiolipin + glycerol. In terms of biological role, catalyzes the reversible phosphatidyl group transfer from one phosphatidylglycerol molecule to another to form cardiolipin (CL) (diphosphatidylglycerol) and glycerol. This is Cardiolipin synthase A from Klebsiella pneumoniae (strain 342).